We begin with the raw amino-acid sequence, 114 residues long: MEMVSKIACFVLLCMVVVAPHAEALTCGQVTAGLAPCLPYLQGRGPLGGCCGGVKGLLGSAKTTADRKTACTCLKSAANAIKGIDLNKAAGIPSVCKVNIPYKISPSTDCSTVQ.

An N-terminal signal peptide occupies residues 1 to 23 (MEMVSKIACFVLLCMVVVAPHAE). 4 disulfide bridges follow: cysteine 27-cysteine 73, cysteine 37-cysteine 50, cysteine 51-cysteine 96, and cysteine 71-cysteine 110.

Belongs to the plant LTP family.

In terms of biological role, plant non-specific lipid-transfer proteins transfer phospholipids as well as galactolipids across membranes. May play a role in wax or cutin deposition in the cell walls of expanding epidermal cells and certain secretory tissues. This chain is Non-specific lipid-transfer protein 1 (LTP1), found in Solanum pennellii (Tomato).